The sequence spans 209 residues: MTERRVPFSLLRSPSWDPFRDWYPAHSRLFDQAFGLPRLPEEWAQWFGHSGWPGYVRPIPPAVEGPAAAAAAAAPAYSRALSRQLSSGVSEIRQTADRWRVSLDVNHFAPEELTVKTKDGVVEITGKHEERQDEHGYISRRLTPKYTLPPGVDPTLVSSSLSPEGTLTVEAPMPKPATQSAEITIPVTFEARAQIGGPEAGKSEQSGAK.

The residue at position 12 (R12) is an Omega-N-methylarginine. S13 is modified (phosphoserine). Phosphoserine; by MAPKAPK2 and MAPKAPK3 is present on S15. S27 carries the phosphoserine modification. The tract at residues 74–209 (APAYSRALSR…AGKSEQSGAK (136 aa)) is interaction with TGFB1I1. The sHSP domain occupies 80–188 (ALSRQLSSGV…QSAEITIPVT (109 aa)). A phosphoserine; by MAPKAPK2, MAPKAPK3 and MAPKAPK5 mark is found at S82 and S86. A phosphoserine mark is found at S87, S90, and S102. At K127 the chain carries N6-acetyllysine. Phosphothreonine is present on T178. A phosphoserine mark is found at S180 and S203.

This sequence belongs to the small heat shock protein (HSP20) family. As to quaternary structure, homooligomer. Homodimer; becomes monomeric upon activation. Heterooligomer; with HSPB6. Associates with alpha- and beta-tubulin. Interacts with TGFB1I1. Interacts with CRYAB. Interacts with HSPB8. Interacts with HSPBAP1. In terms of processing, phosphorylated upon exposure to protein kinase C activators and heat shock. Phosphorylation by MAPKAPK2 and MAPKAPK3 in response to stress dissociates HSPB1 from large small heat-shock protein (sHsps) oligomers and impairs its chaperone activity and ability to protect against oxidative stress effectively. Phosphorylation by MAPKAPK5 in response to PKA stimulation induces F-actin rearrangement.

The protein resides in the cytoplasm. It localises to the nucleus. It is found in the cytoskeleton. Its subcellular location is the spindle. In terms of biological role, small heat shock protein which functions as a molecular chaperone probably maintaining denatured proteins in a folding-competent state. Plays a role in stress resistance and actin organization. Through its molecular chaperone activity may regulate numerous biological processes including the phosphorylation and the axonal transport of neurofilament proteins. This Canis lupus familiaris (Dog) protein is Heat shock protein beta-1 (HSPB1).